Here is a 308-residue protein sequence, read N- to C-terminus: Ribosomal protein uL3 glutamine methyltransferase (308 aa).

Belongs to the protein N5-glutamine methyltransferase family. PrmB subfamily.

It carries out the reaction L-glutaminyl-[ribosomal protein uL3] + S-adenosyl-L-methionine = N(5)-methyl-L-glutaminyl-[ribosomal protein uL3] + S-adenosyl-L-homocysteine + H(+). Functionally, methylates large ribosomal subunit protein uL3 on a specific glutamine residue. The protein is Ribosomal protein uL3 glutamine methyltransferase of Xanthomonas campestris pv. campestris (strain ATCC 33913 / DSM 3586 / NCPPB 528 / LMG 568 / P 25).